A 283-amino-acid polypeptide reads, in one-letter code: Cyclin-C (283 aa).

In terms of domain architecture, Cyclin N-terminal spans 46–144 (NVIQALGEHL…ILECEFYLLE (99 aa)). Residues 252–283 (TILNKMPKPKPPPNSEGEQGTNGSQSSGYSQS) are disordered. Polar residues predominate over residues 267-283 (EGEQGTNGSQSSGYSQS).

The protein belongs to the cyclin family. Cyclin C subfamily. As to quaternary structure, component of the Mediator complex. The cylin/CDK pair formed by ccnc/cdk8 also associates with the large subunit of RNA polymerase II.

The protein localises to the nucleus. Functionally, component of the Mediator complex, a coactivator involved in regulated gene transcription of nearly all RNA polymerase II-dependent genes. Mediator functions as a bridge to convey information from gene-specific regulatory proteins to the basal RNA polymerase II transcription machinery. Mediator is recruited to promoters by direct interactions with regulatory proteins and serves as a scaffold for the assembly of a functional preinitiation complex with RNA polymerase II and the general transcription factors. Binds to and activates cyclin-dependent kinase cdk8 that phosphorylates the CTD (C-terminal domain) of the large subunit of RNA polymerase II (RNAp II), which may inhibit the formation of a transcription initiation complex. The polypeptide is Cyclin-C (ccnc) (Xenopus tropicalis (Western clawed frog)).